A 312-amino-acid chain; its full sequence is Transcription initiation factor IIB-2 (312 aa).

The TFIIB-type zinc finger occupies 2–34 (SDAFCSDCKRHTEVVFDHSAGDTVCSECGLVLE). Zn(2+) contacts are provided by Cys6, Cys9, Cys26, and Cys29. 2 consecutive repeat copies span residues 115–192 (MADR…YIVK) and 216–290 (FCSN…DLYP).

This sequence belongs to the TFIIB family. In terms of assembly, associates with TFIID-IIA (DA complex) to form TFIID-IIA-IIB (DAB-complex) which is then recognized by polymerase II.

The protein localises to the nucleus. Functionally, general factor that plays a major role in the activation of eukaryotic genes transcribed by RNA polymerase II. This Arabidopsis thaliana (Mouse-ear cress) protein is Transcription initiation factor IIB-2 (TFIIB2).